The following is a 104-amino-acid chain: MKNEVFFGEGMKVVKEKYPDLYDIIVKLNDTVFTGKTLDYKTQKLIAIGIVASRCDEVAIEKQMKSAMKELGITKEEIADVLRVVLLTSGMPAFTKAMKILEKL.

The protein to M.jannaschii MJ1511.

This is an uncharacterized protein from Methanocaldococcus jannaschii (strain ATCC 43067 / DSM 2661 / JAL-1 / JCM 10045 / NBRC 100440) (Methanococcus jannaschii).